The following is an 894-amino-acid chain: Tyrosine-protein kinase receptor UFO (894 aa).

A signal peptide spans 1 to 25 (MAWRCPRMGRVPLAWCLALCGWACM). The tract at residues 26–92 (APRGTQAEES…QTQVPLGEDE (67 aa)) is interaction with GAS6. Residues 26–451 (APRGTQAEES…STPAFSWPWW (426 aa)) lie on the Extracellular side of the membrane. 2 consecutive Ig-like C2-type domains span residues 27-128 (PRGT…TFVS) and 139-222 (PYFL…ATIT). An N-linked (GlcNAc...) asparagine glycan is attached at Asn43. An intrachain disulfide couples Cys56 to Cys117. N-linked (GlcNAc...) asparagine glycosylation is found at Asn157 and Asn198. Cys160 and Cys205 are joined by a disulfide. Fibronectin type-III domains are found at residues 227 to 331 (QPRN…TPEG) and 336 to 428 (PPEN…AWRP). 3 N-linked (GlcNAc...) asparagine glycosylation sites follow: Asn339, Asn345, and Asn401. The chain crosses the membrane as a helical span at residues 452-472 (YVLLGAVVAAACVLILALFLV). Topologically, residues 473 to 894 (HRRKKETRYG…PAAPGQEDGA (422 aa)) are cytoplasmic. A Protein kinase domain is found at 536–807 (VALGKTLGEG…ELREDLENTL (272 aa)). Residues 542 to 550 (LGEGEFGAV) and Lys567 each bind ATP. Asp672 serves as the catalytic Proton acceptor. Phosphotyrosine; by autocatalysis occurs at positions 703, 779, and 821. Disordered stretches follow at residues 823 to 853 (NMDE…DSCS) and 866 to 894 (YVLC…EDGA). Tyr866 carries the phosphotyrosine; by autocatalysis modification. A Phosphoserine modification is found at Ser884.

The protein belongs to the protein kinase superfamily. Tyr protein kinase family. AXL/UFO subfamily. In terms of assembly, heterodimer and heterotetramer with ligand GAS6. Interacts with CBL, GRB2, LCK, NCK2, PIK3R1, PIK3R2, PIK3R3, PLCG1, SOCS1 and TNS2. Part of a complex including AXL, TNK2 and GRB2, in which GRB2 promotes AXL recruitment by TNK2. In terms of processing, monoubiquitinated upon GAS6-binding. A very small proportion of the receptor could be subjected to polyubiquitination in a very transient fashion. Post-translationally, phosphorylated at tyrosine residues by autocatalysis, which activates kinase activity. As to expression, highly expressed in metastatic colon tumors. Expressed in primary colon tumors. Weakly expressed in normal colon tissue.

Its subcellular location is the cell membrane. The catalysed reaction is L-tyrosyl-[protein] + ATP = O-phospho-L-tyrosyl-[protein] + ADP + H(+). Activated by GAS6-binding and subsequent autophosphorylation. In terms of biological role, receptor tyrosine kinase that transduces signals from the extracellular matrix into the cytoplasm by binding growth factor GAS6 and which is thus regulating many physiological processes including cell survival, cell proliferation, migration and differentiation. Ligand binding at the cell surface induces dimerization and autophosphorylation of AXL. Following activation by ligand, AXL binds and induces tyrosine phosphorylation of PI3-kinase subunits PIK3R1, PIK3R2 and PIK3R3; but also GRB2, PLCG1, LCK and PTPN11. Other downstream substrate candidates for AXL are CBL, NCK2, SOCS1 and TNS2. Recruitment of GRB2 and phosphatidylinositol 3 kinase regulatory subunits by AXL leads to the downstream activation of the AKT kinase. GAS6/AXL signaling plays a role in various processes such as endothelial cell survival during acidification by preventing apoptosis, optimal cytokine signaling during human natural killer cell development, hepatic regeneration, gonadotropin-releasing hormone neuron survival and migration, platelet activation, or regulation of thrombotic responses. Also plays an important role in inhibition of Toll-like receptors (TLRs)-mediated innate immune response. Functionally, (Microbial infection) Acts as a receptor for lassa virus and lymphocytic choriomeningitis virus, possibly through GAS6 binding to phosphatidyl-serine at the surface of virion envelope. Its function is as follows. (Microbial infection) Acts as a receptor for Ebolavirus, possibly through GAS6 binding to phosphatidyl-serine at the surface of virion envelope. (Microbial infection) Promotes Zika virus entry in glial cells, Sertoli cells and astrocytes. Additionally, Zika virus potentiates AXL kinase activity to antagonize type I interferon signaling and thereby promotes infection. Interferon signaling inhibition occurs via an SOCS1-dependent mechanism. The sequence is that of Tyrosine-protein kinase receptor UFO (AXL) from Homo sapiens (Human).